Here is a 297-residue protein sequence, read N- to C-terminus: Bifunctional protein FolD (297 aa).

NADP(+) contacts are provided by residues 164-166, S193, and V234; that span reads GRS.

This sequence belongs to the tetrahydrofolate dehydrogenase/cyclohydrolase family. As to quaternary structure, homodimer.

The enzyme catalyses (6R)-5,10-methylene-5,6,7,8-tetrahydrofolate + NADP(+) = (6R)-5,10-methenyltetrahydrofolate + NADPH. It catalyses the reaction (6R)-5,10-methenyltetrahydrofolate + H2O = (6R)-10-formyltetrahydrofolate + H(+). Its pathway is one-carbon metabolism; tetrahydrofolate interconversion. Functionally, catalyzes the oxidation of 5,10-methylenetetrahydrofolate to 5,10-methenyltetrahydrofolate and then the hydrolysis of 5,10-methenyltetrahydrofolate to 10-formyltetrahydrofolate. The chain is Bifunctional protein FolD from Natronomonas pharaonis (strain ATCC 35678 / DSM 2160 / CIP 103997 / JCM 8858 / NBRC 14720 / NCIMB 2260 / Gabara) (Halobacterium pharaonis).